The primary structure comprises 160 residues: Anaerobic nitrite reductase Glb1-1 (160 aa).

The Globin domain occupies 8-157 (GFTEEQEALV…LVNAIKSEMK (150 aa)). Residues 41 to 45 (EIAPS) carry the Homodimerization motif. Positions 51, 65, 69, 99, and 104 each coordinate heme b. A Homodimerization motif is present at residues 111–123 (DEHFEVTKFALLE).

Belongs to the plant globin family. Homodimer. Requires heme b as cofactor.

It catalyses the reaction Fe(III)-heme b-[protein] + nitric oxide + H2O = Fe(II)-heme b-[protein] + nitrite + 2 H(+). Functionally, phytoglobin that reduces nitrite to nitric oxide (NO) under anoxic conditions (e.g. during flooding or in waterlogged soil) and upon root nodulation. Required for general plant development and during nodulation, especially for the onset of symbiosis. Monitors nitric oxide (NO) levels during early phase of the nitrogen-fixing symbiosis and buffers oxygen in functioning nodules. May not function as an oxygen storage or transport protein. Has an unusually high affinity for O(2) through a hexacoordinate heme iron because of a very low dissociation constant. This is Anaerobic nitrite reductase Glb1-1 from Medicago truncatula (Barrel medic).